The primary structure comprises 145 residues: Hydrophobin-like protein 1 (145 aa).

An N-terminal signal peptide occupies residues 1 to 20 (MYLLQISISLLLLISTAATA). Asn-36 carries an N-linked (GlcNAc...) asparagine glycan. 4 cysteine pairs are disulfide-bonded: Cys-61/Cys-121, Cys-71/Cys-113, Cys-72/Cys-104, and Cys-122/Cys-139.

It is found in the secreted. The protein localises to the cell wall. Aerial growth, conidiation, and dispersal of filamentous fungi in the environment rely upon a capability of their secreting small amphipathic proteins called hydrophobins (HPBs) with low sequence identity. Class I can self-assemble into an outermost layer of rodlet bundles on aerial cell surfaces, conferring cellular hydrophobicity that supports fungal growth, development and dispersal; whereas Class II form highly ordered films at water-air interfaces through intermolecular interactions but contribute nothing to the rodlet structure. In Botryotinia fuckeliana, hydrophobins are not involved in conferring surface hydrophobicity to conidia and aerial hyphae and their function in sclerotia and fruiting bodies remains to be investigated. The chain is Hydrophobin-like protein 1 from Botryotinia fuckeliana (strain B05.10) (Noble rot fungus).